The primary structure comprises 534 residues: Beta-glucosidase 31 (534 aa).

An N-terminal signal peptide occupies residues 1–22 (MAIKLIALVITLCVASWDVAQG). Gln51 provides a ligand contact to a beta-D-glucoside. N-linked (GlcNAc...) asparagine glycosylation is present at Asn68. Residues His154 and 199–200 (NE) each bind a beta-D-glucoside. The active-site Proton donor is Glu200. A disulfide bond links Cys219 and Cys227. A beta-D-glucoside is bound at residue Tyr344. A glycan (N-linked (GlcNAc...) asparagine) is linked at Asn374. Glu417 contributes to the a beta-D-glucoside binding site. Glu417 acts as the Nucleophile in catalysis. The N-linked (GlcNAc...) asparagine glycan is linked to Asn425. A beta-D-glucoside is bound by residues Trp467, 474–475 (EW), and Phe483.

This sequence belongs to the glycosyl hydrolase 1 family.

It carries out the reaction Hydrolysis of terminal, non-reducing beta-D-glucosyl residues with release of beta-D-glucose.. The polypeptide is Beta-glucosidase 31 (Arabidopsis thaliana (Mouse-ear cress)).